Consider the following 285-residue polypeptide: Nucleotide-binding protein PFLU_0879 (285 aa).

8 to 15 (GRSGSGKS) contributes to the ATP binding site. Residue 60–63 (DARN) participates in GTP binding.

This sequence belongs to the RapZ-like family.

Displays ATPase and GTPase activities. The chain is Nucleotide-binding protein PFLU_0879 from Pseudomonas fluorescens (strain SBW25).